The primary structure comprises 317 residues: Probable F-box protein At2g36090 (317 aa).

The F-box domain maps to 25-74 (IESHILTRLDGATLASVSCASSHLHHLASNEILWSKICRSTWPSCSGGSR).

The chain is Probable F-box protein At2g36090 from Arabidopsis thaliana (Mouse-ear cress).